The primary structure comprises 925 residues: Periplasmic nitrate reductase (925 aa).

A signal peptide (tat-type signal) is located at residues 1 to 30; sequence MDRREFIKSSAAAAACSAAGIAVPSSLSAA. A 4Fe-4S Mo/W bis-MGD-type domain is found at 36-92; the sequence is WRWDKSACRFCGTGCGIMVATKNGKIVAVKGDPLAPVNRGLNCIKGYFNAKIMYGED. 4 residues coordinate [4Fe-4S] cluster: Cys-43, Cys-46, Cys-50, and Cys-78. Mo-bis(molybdopterin guanine dinucleotide) contacts are provided by residues Lys-80, Gln-148, Asn-173, Cys-177, 210–217, Met-418, Gln-422, Asn-528, 553–554, Lys-576, Asp-603, and 815–824; these read WGANMAEM, SD, and TGRVLEHWHS. Position 891 (Trp-891) interacts with substrate. Residues Asn-899 and Lys-916 each coordinate Mo-bis(molybdopterin guanine dinucleotide).

Belongs to the prokaryotic molybdopterin-containing oxidoreductase family. NasA/NapA/NarB subfamily. In terms of assembly, component of the periplasmic nitrate reductase NapAB complex composed of NapA and NapB. [4Fe-4S] cluster serves as cofactor. Requires Mo-bis(molybdopterin guanine dinucleotide) as cofactor. Predicted to be exported by the Tat system. The position of the signal peptide cleavage has not been experimentally proven.

The protein resides in the periplasm. It carries out the reaction 2 Fe(II)-[cytochrome] + nitrate + 2 H(+) = 2 Fe(III)-[cytochrome] + nitrite + H2O. In terms of biological role, catalytic subunit of the periplasmic nitrate reductase complex NapAB. Receives electrons from NapB and catalyzes the reduction of nitrate to nitrite. The polypeptide is Periplasmic nitrate reductase (Campylobacter fetus subsp. fetus (strain 82-40)).